Reading from the N-terminus, the 485-residue chain is Protein DETOXIFICATION 14 (485 aa).

12 consecutive transmembrane segments (helical) span residues 30 to 50, 68 to 88, 112 to 132, 147 to 167, 175 to 195, 207 to 227, 259 to 279, 288 to 308, 329 to 349, 372 to 392, 405 to 425, and 432 to 452; these read LSYI…LQVI, IAVS…ASAL, IVSL…IGDI, GKFA…QPLV, LILP…VLCW, GAAI…GLYM, ASMI…SGIL, VLSV…SLGA, AVYT…AIVF, MAPL…LSGV, VNLA…AFGF, and LWIG…LIVI.

It belongs to the multi antimicrobial extrusion (MATE) (TC 2.A.66.1) family.

The protein localises to the membrane. The sequence is that of Protein DETOXIFICATION 14 from Arabidopsis thaliana (Mouse-ear cress).